A 2138-amino-acid chain; its full sequence is Non-reducing polyketide synthase rads2 (2138 aa).

The tract at residues 11–249 (LIFGDQTDSW…NPLNIHALQH (239 aa)) is N-terminal acylcarrier protein transacylase (SAT) domain. The region spanning 373–804 (SGRIAIVGMA…GGNACMLLED (432 aa)) is the Ketosynthase family 3 (KS3) domain. Residues Cys549, His684, and His724 each act as for beta-ketoacyl synthase activity in the active site. Residues 901 to 1184 (VFVFGGQGSH…KGVCTSFVRA (284 aa)) are malonyl-CoA:ACP transacylase (MAT) domain. The active-site For acyl/malonyl transferase activity is the Ser992. Positions 1291 to 1437 (AQYVVQESPS…KDVQRLQADW (147 aa)) are N-terminal hotdog fold. The PKS/mFAS DH domain maps to 1291–1610 (AQYVVQESPS…FHEISNATLK (320 aa)). The tract at residues 1303-1607 (KKIQVTFRAS…GLEFHEISNA (305 aa)) is product template (PT) domain. The interval 1459 to 1610 (HGHRFQPDIF…FHEISNATLK (152 aa)) is C-terminal hotdog fold. The interval 1618–1666 (SKSVLKPDNAAPLKAPEKKEDATPTAPKKSADPGKEEEEEGDTATPAAV) is disordered. A Carrier domain is found at 1666–1740 (VGEFEVIIQT…DLRRAFAMAP (75 aa)). Ser1700 is modified (O-(pantetheine 4'-phosphoryl)serine). The span at 1740–1771 (PSSSSSTSASESVSESLDDSSSTSRSATPSSS) shows a compositional bias: low complexity. 2 disordered regions span residues 1740-1781 (PSSS…GFVE) and 1807-1828 (QATK…SSPA). Residues 1860 to 2006 (ADGTGSIATY…TRRHLGAMFS (147 aa)) form a thioesterase (TE) domain region.

It participates in secondary metabolite biosynthesis. In terms of biological role, non-reducing polyketide synthase; part of the gene cluster that mediates the biosynthesis of radicicol, a resorcylic acid lactone (RAL) that irreversibly inhibits the HSP90 molecular chaperone, an important target for cancer chemotherapy. The cluster encodes only two apparent post-PKS enzymes, a cytochrome P450 monooxygenase (radP) and a non-heme halogenase (radH) that introduce the epoxide and the chlorine, respectively. If this cluster includes all the genes required for radicicol biosynthesis, the remaining structural features of radicicol are presumably generated by the PKSs rads1 and rads2. The C-2' ketone could arise if the R-PKS rads1 and NR-PKS rads2 each carry out four iterations, in contrast to the five iteration-three iteration split for the hypothemycin PKSs. The origin of the cis 5',6' double bond is not known. The radicicol R-PKS rads1 ER domain may catalyze either double bond isomerization or reduction in the third iteration. The sequence is that of Non-reducing polyketide synthase rads2 from Floropilus chiversii (Chaetomium chiversii).